Here is a 182-residue protein sequence, read N- to C-terminus: MNRLKKHYEEIIRLDMIRKFNYVNPHMVPKIDKIIVNMGVKEAASDKKQILAPLLILELITGQKAIVTKAKKSISNFKIRKGFPIGVSVTLRGNNMYEFLSKLITLVLPKIRDFKGVPFTSINKYGHLAIGIKDLLVFPEIESEYDKFNRVYGANIVIVTTAKTKKEAGVLLSGFQIPLNKR.

Belongs to the universal ribosomal protein uL5 family.

The protein localises to the mitochondrion. The polypeptide is Large ribosomal subunit protein uL5m (RPL5) (Reclinomonas americana).